The sequence spans 83 residues: Colicin-E5 immunity protein (83 aa).

In terms of biological role, this protein is able to protect a cell, which harbors the plasmid ColE5 encoding colicin E5, against colicin E5. The chain is Colicin-E5 immunity protein (imm) from Escherichia coli.